The following is a 746-amino-acid chain: WD repeat-containing and planar cell polarity effector protein fritz homolog (746 aa).

WD repeat units follow at residues 326-374 (IQCV…TLLA) and 375-414 (QTEL…INIQ).

It belongs to the WD repeat fritz family. Component of the CPLANE (ciliogenesis and planar polarity effectors) complex, composed of INTU, FUZ and WDPCP. Interacts with CPLANE1.

It localises to the cell membrane. Its subcellular location is the cytoplasm. The protein localises to the cytoskeleton. It is found in the cilium axoneme. The protein resides in the cilium basal body. Its function is as follows. Probable effector of the planar cell polarity signaling pathway which regulates the septin cytoskeleton in both ciliogenesis and collective cell movements. Together with FUZ and WDPCP proposed to function as core component of the CPLANE (ciliogenesis and planar polarity effectors) complex involved in the recruitment of peripheral IFT-A proteins to basal bodies. Binds phosphatidylinositol 3-phosphate with highest affinity, followed by phosphatidylinositol 4-phosphate and phosphatidylinositol 5-phosphate. In Homo sapiens (Human), this protein is WD repeat-containing and planar cell polarity effector protein fritz homolog (WDPCP).